The chain runs to 367 residues: Apurinic-apyrimidinic endonuclease 1 (367 aa).

Zn(2+) is bound by residues His83, His123, Glu158, Asp192, His195, His229, Asp242, His244, and Glu274. Positions 312–367 (DTLQKLGAKSRKEQLDKFEVKQKKRAGGTKRKKATAEPSDNDILSQMTKKRKTKKE) are disordered. The span at 321 to 332 (SRKEQLDKFEVK) shows a compositional bias: basic and acidic residues. Residues 333–344 (QKKRAGGTKRKK) are compositionally biased toward basic residues. Phosphoserine is present on Ser356.

Belongs to the AP endonuclease 2 family. As to quaternary structure, monomer. Zn(2+) is required as a cofactor.

The protein resides in the nucleus. DNA repair enzyme that cleaves apurinic/apyrimidinic (AP) sites and removes 3'-blocking groups present at single strand breaks of damaged DNA. APN1 accounts for &gt; 97% of both apurinic/apyrimidinic (AP) endonuclease and DNA 3'-repair diesterase activities. This chain is Apurinic-apyrimidinic endonuclease 1 (APN1), found in Saccharomyces cerevisiae (strain ATCC 204508 / S288c) (Baker's yeast).